Here is a 340-residue protein sequence, read N- to C-terminus: Entry-fusion complex protein OPG094 (340 aa).

Residues 1–20 (MGGGVSVELPKRDPPPGVPT) form a disordered region. Residue G2 is the site of N-myristoyl glycine; by host attachment. Over 2–319 (GGGVSVELPK…VQHNIKHSFD (318 aa)) the chain is Virion surface. A helical; Signal-anchor for type II membrane protein transmembrane segment spans residues 320–340 (LKLHLISLLSLLVIWILIVAI).

It belongs to the orthopoxvirus OPG086 family. In terms of assembly, interacts with OPG143. Component of the entry fusion complex (EFC) composed of OPG053, OPG076, OPG086, OPG094, OPG095, OPG099, OPG107, OPG143, OPG104, OPG147 and OPG155. Except for OPG095 and OPG053, each of the EFC proteins is required for assembly or stability of the complex. In terms of processing, unglycosylated because produced in viral factories instead of the classic ER -Golgi route.

It is found in the virion membrane. Its function is as follows. Component of the entry fusion complex (EFC), which consists of 11 proteins. During cell infection, this complex mediates entry of the virion core into the host cytoplasm by a two-step mechanism consisting of lipid mixing of the viral and cellular membranes and subsequent pore formation. The polypeptide is Entry-fusion complex protein OPG094 (OPG094) (Homo sapiens (Human)).